The primary structure comprises 297 residues: Dipicolinate synthase subunit A (297 aa).

Residues 164 to 165 (RT), Arg-185, Thr-203, 242 to 244 (LAS), and 264 to 267 (APGL) contribute to the NADP(+) site.

As to quaternary structure, dipicolinate synthase likely consists of DpaA and DpaB, since both proteins are required for DPA synthesis.

The enzyme catalyses (S)-2,3-dihydrodipicolinate + NADP(+) = dipicolinate + NADPH + H(+). Together with DpaB, catalyzes the conversion of dihydrodipicolinate to dipicolinate (DPA), which constitutes up to 10% of the dry weight of the spore. The sequence is that of Dipicolinate synthase subunit A (dpaA) from Bacillus subtilis (strain 168).